The primary structure comprises 437 residues: Elongation factor 1-gamma-B (437 aa).

In terms of domain architecture, GST N-terminal spans 2 to 87 (AGGTLYTYPD…YVANDELRGS (86 aa)). In terms of domain architecture, GST C-terminal spans 89 to 222 (NRLHQAQVIQ…KMAQFDAKKF (134 aa)). The span at 225 to 240 (VQPKKETPKKEKPAKE) shows a compositional bias: basic and acidic residues. A disordered region spans residues 225 to 279 (VQPKKETPKKEKPAKEPKKKKKKKKKATPAPAPAPEDDLDESEKALAAEPKSKDP). Residues 241–251 (PKKKKKKKKKA) are compositionally biased toward basic residues. Residues 266–279 (SEKALAAEPKSKDP) are compositionally biased toward basic and acidic residues. Residues 276 to 437 (SKDPYAHLPK…KAFNQGKIFK (162 aa)) enclose the EF-1-gamma C-terminal domain.

In terms of assembly, EF-1 is composed of four subunits: alpha, beta, delta, and gamma.

Its function is as follows. Probably plays a role in anchoring the complex to other cellular components. This chain is Elongation factor 1-gamma-B (eef1g-b), found in Xenopus laevis (African clawed frog).